We begin with the raw amino-acid sequence, 732 residues long: Kell blood group glycoprotein (732 aa).

The tract at residues 1-37 (MEGGDQSEEEPRERSQAGGMGTLWSQESTPEERLPVE) is disordered. Topologically, residues 1-47 (MEGGDQSEEEPRERSQAGGMGTLWSQESTPEERLPVEGSRPWAVARR) are cytoplasmic. Ser-7 is subject to Phosphoserine. Residues 48–67 (VLTAILILGLLLCFSVLLFY) form a helical; Signal-anchor for type II membrane protein membrane-spanning segment. The Extracellular portion of the chain corresponds to 68-732 (NFQNCGPRPC…LNPSSRCQLW (665 aa)). The Peptidase M13 domain maps to 76 to 732 (PCETSVCLDL…LNPSSRCQLW (657 aa)). Residues Cys-77 and Cys-82 are joined by a disulfide bond. 2 N-linked (GlcNAc...) asparagine glycosylation sites follow: Asn-94 and Asn-115. Intrachain disulfides connect Cys-100–Cys-717, Cys-108–Cys-682, Cys-155–Cys-410, and Cys-610–Cys-729. A glycan (N-linked (GlcNAc...) asparagine; in KEL2 antigen) is linked at Asn-191. N-linked (GlcNAc...) asparagine glycosylation occurs at Asn-345. His-581 contributes to the Zn(2+) binding site. Glu-582 is an active-site residue. His-585 provides a ligand contact to Zn(2+). A glycan (N-linked (GlcNAc...) asparagine) is linked at Asn-627. A Zn(2+)-binding site is contributed by Glu-634. Asp-638 acts as the Proton donor in catalysis. Residues 684–703 (KPSPQDSHDTHSPPHLRVHG) form a disordered region.

The protein belongs to the peptidase M13 family. Heterodimer with XK; disulfide-linked. Zn(2+) serves as cofactor. N-glycosylated. As to expression, expressed at high levels in erythrocytes and testis (in Sertoli cells), and, at lower levels, in skeletal muscle, tonsils (in follicular dendritic cells), lymph node, spleen and appendix (at protein level). Also expressed in many adult and fetal nonerythroid tissues, including brain, spleen, lymph nodes and bone marrow.

Its subcellular location is the cell membrane. Its function is as follows. Zinc endopeptidase with endothelin-3-converting enzyme activity. Cleaves EDN1, EDN2 and EDN3, with a marked preference for EDN3. The polypeptide is Kell blood group glycoprotein (KEL) (Homo sapiens (Human)).